The following is a 558-amino-acid chain: Ankyrin repeat protein OPG189 (558 aa).

7 ANK repeats span residues 65 to 95, 169 to 205, 209 to 239, 243 to 272, 276 to 304, 339 to 368, and 372 to 401; these read YGENILHIYSMDDANTNIIIFFLDNVLNINK, YGCTLLHRCIYHYKKSESESYNELIKILLNNGSDVDK, HGNTPFILLCKHDIDNVELFEICLENANIDS, NGYTPLHYVSCRNKYDFVKSLISKGANVNT, FGTTPFYCGIIHGISLIKLYLESDTELEI, YNETSIYDAVSYNAYNMLVYLLNRNGDFET, and SGCTCISKAVANNNKIIMEVLLSKQPSLKI.

It belongs to the orthopoxvirus OPG189 protein family.

Contributes to viral release without involving rearrangement of host actin. In Homo sapiens (Human), this protein is Ankyrin repeat protein OPG189 (OPG189).